Here is a 91-residue protein sequence, read N- to C-terminus: Small ribosomal subunit protein bS20 (91 aa).

The segment at 1-23 (MANTPSAKKRAKQAEKRRSHNAS) is disordered. The span at 7–20 (AKKRAKQAEKRRSH) shows a compositional bias: basic residues.

It belongs to the bacterial ribosomal protein bS20 family.

Binds directly to 16S ribosomal RNA. In Pseudomonas aeruginosa (strain LESB58), this protein is Small ribosomal subunit protein bS20.